The following is a 226-amino-acid chain: Large ribosomal subunit protein uL3 (226 aa).

Belongs to the universal ribosomal protein uL3 family. As to quaternary structure, part of the 50S ribosomal subunit. Forms a cluster with proteins L14 and L19.

Its function is as follows. One of the primary rRNA binding proteins, it binds directly near the 3'-end of the 23S rRNA, where it nucleates assembly of the 50S subunit. This Sulfurihydrogenibium sp. (strain YO3AOP1) protein is Large ribosomal subunit protein uL3.